A 436-amino-acid polypeptide reads, in one-letter code: Chromosomal replication initiator protein DnaA (436 aa).

Residues 1 to 69 form a domain I, interacts with DnaA modulators region; sequence MLADEVIELL…ANIFEVKTGI (69 aa). The segment at 69-99 is domain II; it reads IKPVISITTQKNRVSIKAKDIDVKQIRTQSS. The interval 100–314 is domain III, AAA+ region; sequence LLNPSYTFES…SAIININAFA (215 aa). ATP contacts are provided by Gly144, Gly146, Lys147, and Thr148. The tract at residues 315-436 is domain IV, binds dsDNA; sequence NIMRQEITLE…ELKNKITSKE (122 aa).

This sequence belongs to the DnaA family. Oligomerizes as a right-handed, spiral filament on DNA at oriC.

The protein resides in the cytoplasm. Its function is as follows. Plays an essential role in the initiation and regulation of chromosomal replication. ATP-DnaA binds to the origin of replication (oriC) to initiate formation of the DNA replication initiation complex once per cell cycle. Binds the DnaA box (a 9 base pair repeat at the origin) and separates the double-stranded (ds)DNA. Forms a right-handed helical filament on oriC DNA; dsDNA binds to the exterior of the filament while single-stranded (ss)DNA is stabiized in the filament's interior. The ATP-DnaA-oriC complex binds and stabilizes one strand of the AT-rich DNA unwinding element (DUE), permitting loading of DNA polymerase. After initiation quickly degrades to an ADP-DnaA complex that is not apt for DNA replication. Binds acidic phospholipids. In Campylobacter fetus subsp. fetus (strain 82-40), this protein is Chromosomal replication initiator protein DnaA.